Here is a 235-residue protein sequence, read N- to C-terminus: Isopentenyl-diphosphate Delta-isomerase I (235 aa).

Lysine 38 contributes to the substrate binding site. Mg(2+) is bound by residues histidine 42 and histidine 54. One can recognise a Nudix hydrolase domain in the interval 52-204; sequence LLHRAFSVFL…GLKLSPWFRL (153 aa). Substrate contacts are provided by arginine 73 and lysine 77. The active site involves cysteine 89. Serine 90 contacts substrate. Glutamate 149 and glutamate 151 together coordinate Mg(2+). Glutamate 151 is a catalytic residue.

Belongs to the IPP isomerase type 1 family. Requires Mg(2+) as cofactor.

It carries out the reaction isopentenyl diphosphate = dimethylallyl diphosphate. The protein operates within isoprenoid biosynthesis; dimethylallyl diphosphate biosynthesis; dimethylallyl diphosphate from isopentenyl diphosphate: step 1/1. Its pathway is porphyrin-containing compound metabolism; chlorophyll biosynthesis. Functionally, catalyzes the 1,3-allylic rearrangement of the homoallylic substrate isopentenyl (IPP) to its highly electrophilic allylic isomer, dimethylallyl diphosphate (DMAPP). The sequence is that of Isopentenyl-diphosphate Delta-isomerase I (IPI1) from Camptotheca acuminata (Happy tree).